Reading from the N-terminus, the 130-residue chain is Ribonuclease P protein component 2 (130 aa).

It belongs to the eukaryotic/archaeal RNase P protein component 2 family. In terms of assembly, consists of a catalytic RNA component and at least 4-5 protein subunits.

Its subcellular location is the cytoplasm. The enzyme catalyses Endonucleolytic cleavage of RNA, removing 5'-extranucleotides from tRNA precursor.. In terms of biological role, part of ribonuclease P, a protein complex that generates mature tRNA molecules by cleaving their 5'-ends. The polypeptide is Ribonuclease P protein component 2 (Methanococcus vannielii (strain ATCC 35089 / DSM 1224 / JCM 13029 / OCM 148 / SB)).